The sequence spans 327 residues: DNA-directed RNA polymerase subunit alpha (327 aa).

Positions 1 to 231 are alpha N-terminal domain (alpha-NTD); the sequence is MIYQMQMPAK…DHVTFFANFS (231 aa). Residues 252-327 form an alpha C-terminal domain (alpha-CTD) region; that stretch reads MRRLFHTKIE…GMDITKYQMK (76 aa).

The protein belongs to the RNA polymerase alpha chain family. Homodimer. The RNAP catalytic core consists of 2 alpha, 1 beta, 1 beta' and 1 omega subunit. When a sigma factor is associated with the core the holoenzyme is formed, which can initiate transcription.

The catalysed reaction is RNA(n) + a ribonucleoside 5'-triphosphate = RNA(n+1) + diphosphate. Its function is as follows. DNA-dependent RNA polymerase catalyzes the transcription of DNA into RNA using the four ribonucleoside triphosphates as substrates. This Pelodictyon phaeoclathratiforme (strain DSM 5477 / BU-1) protein is DNA-directed RNA polymerase subunit alpha.